The chain runs to 390 residues: Manganese peroxidase 2 (390 aa).

Residues 1–23 form the signal peptide; it reads MAFNFAAILAFVSLAAVTSAAPS. 5 disulfides stabilise this stretch: Cys-27/Cys-39, Cys-38/Cys-313, Cys-57/Cys-141, Cys-277/Cys-343, and Cys-365/Cys-372. Mn(2+)-binding residues include Glu-59 and Glu-63. The active-site Proton acceptor is His-70. Ca(2+) is bound by residues Asp-71, Gly-86, Asp-88, and Ser-90. N-linked (GlcNAc...) asparagine glycosylation is present at Asn-155. His-197 is a heme b binding site. Ser-198 contacts Ca(2+). Residue Asp-203 participates in Mn(2+) binding. Residues Asp-215, Thr-217, and Asp-222 each contribute to the Ca(2+) site. Asn-241 carries N-linked (GlcNAc...) asparagine glycosylation.

Belongs to the peroxidase family. Ligninase subfamily. The cofactor is heme b. Requires Ca(2+) as cofactor.

It is found in the secreted. It catalyses the reaction 2 Mn(2+) + H2O2 + 2 H(+) = 2 Mn(3+) + 2 H2O. Its function is as follows. Catalyzes the oxidation of Mn(2+) to Mn(3+). The latter, acting as a diffusible redox mediator, is capable of oxidizing a variety of lignin compounds. This Phlebia radiata (White-rot fungus) protein is Manganese peroxidase 2 (mnp2).